Here is a 237-residue protein sequence, read N- to C-terminus: 7-cyano-7-deazaguanine synthase (237 aa).

14-24 (FSGGQDSATCL) is a binding site for ATP. Zn(2+) is bound by residues Cys-202, Cys-217, Cys-220, and Cys-223.

Belongs to the QueC family. Zn(2+) serves as cofactor.

It carries out the reaction 7-carboxy-7-deazaguanine + NH4(+) + ATP = 7-cyano-7-deazaguanine + ADP + phosphate + H2O + H(+). Its pathway is purine metabolism; 7-cyano-7-deazaguanine biosynthesis. Functionally, catalyzes the ATP-dependent conversion of 7-carboxy-7-deazaguanine (CDG) to 7-cyano-7-deazaguanine (preQ(0)). In Rhodopseudomonas palustris (strain TIE-1), this protein is 7-cyano-7-deazaguanine synthase.